The sequence spans 184 residues: Uroplakin-2 (184 aa).

A signal peptide spans 1–25 (MAPLLPIRTLPLILILLALLSPGAA). Residues 26–84 (DFNISSLSGLLSPALTESLLVALPPCHLTGGNATLMVRRANDSKVVTSSFVVPPCRGRR) constitute a propeptide that is removed on maturation. 3 N-linked (GlcNAc...) asparagine glycosylation sites follow: Asn28, Asn57, and Asn66. The Lumenal segment spans residues 85-155 (ELVSVVDSGA…IGLGMARTGG (71 aa)). The helical transmembrane segment at 156–176 (MVVITVLLSVAMFLLVLGFII) threads the bilayer. The Cytoplasmic segment spans residues 177–184 (ALALGSRK).

This sequence belongs to the uroplakin-2 family. As to quaternary structure, interacts with uroplakin-1a (UPK1A). Expressed in ureter.

The protein localises to the cell membrane. Component of the asymmetric unit membrane (AUM); a highly specialized biomembrane elaborated by terminally differentiated urothelial cells. May play an important role in regulating the assembly of the AUM. The polypeptide is Uroplakin-2 (UPK2) (Homo sapiens (Human)).